We begin with the raw amino-acid sequence, 341 residues long: 2-dehydro-3-deoxy-L-galactonate 5-dehydrogenase (341 aa).

Cys37 is a Zn(2+) binding site. Residues Thr39 and His42 each act as charge relay system in the active site. Zn(2+)-binding residues include His60, Glu61, Cys90, Cys93, Cys96, and Cys104.

Belongs to the zinc-containing alcohol dehydrogenase family. Requires Zn(2+) as cofactor.

It carries out the reaction 2-dehydro-3-deoxy-L-galactonate + NAD(+) = 3-deoxy-D-glycero-2,5-hexodiulosonate + NADH + H(+). Functionally, involved in the degradation of 3,6-anhydro-L-galactose, which is the major monomeric sugar of red macroalgae. Catalyzes the third step of the pathway, the NAD(+)-dependent oxidation of 2-dehydro-3-deoxy-L-galactonate (L-KDGal) to 3-deoxy-D-glycero-2,5-hexodiulosonate (L-DDGal). In Pseudoalteromonas atlantica (strain T6c / ATCC BAA-1087), this protein is 2-dehydro-3-deoxy-L-galactonate 5-dehydrogenase.